A 258-amino-acid polypeptide reads, in one-letter code: Mediator of RNA polymerase II transcription subunit 18 (258 aa).

This sequence belongs to the Mediator complex subunit 18 family. As to quaternary structure, component of the Mediator complex.

It is found in the nucleus. In terms of biological role, component of the Mediator complex, a coactivator involved in the regulated transcription of nearly all RNA polymerase II-dependent genes. Mediator functions as a bridge to convey information from gene-specific regulatory proteins to the basal RNA polymerase II transcription machinery. Mediator is recruited to promoters by direct interactions with regulatory proteins and serves as a scaffold for the assembly of a functional preinitiation complex with RNA polymerase II and the general transcription factors. The protein is Mediator of RNA polymerase II transcription subunit 18 (SRB5) of Eremothecium gossypii (strain ATCC 10895 / CBS 109.51 / FGSC 9923 / NRRL Y-1056) (Yeast).